A 164-amino-acid chain; its full sequence is MPRAAKRSPGYRVQNRKHKRKPCKDCVAQGLPLTRDAKYPGPRCATHHREFRTARSSTSWETRILATYGITGDEYWQIYEFQGGRCYICQRANGKKKRLSVDHDHKTGIVRGLLCTMCNKYTLGWARDCIEFFKRAIEYLLNPPAVQVIGERIAPVEADKLSRT.

In Mycobacterium (Mycobacteriophage L5), this protein is Gene 59 protein (59).